We begin with the raw amino-acid sequence, 237 residues long: Purine nucleoside phosphorylase DeoD-type (237 aa).

Histidine 5 is an a purine D-ribonucleoside binding site. Residues glycine 21, arginine 25, arginine 44, and 88–91 each bind phosphate; that span reads RVGS. Residues 180–182 and 204–205 contribute to the a purine D-ribonucleoside site; these read EME and SD. Aspartate 205 (proton donor) is an active-site residue.

The protein belongs to the PNP/UDP phosphorylase family. Homohexamer; trimer of homodimers.

It carries out the reaction a purine D-ribonucleoside + phosphate = a purine nucleobase + alpha-D-ribose 1-phosphate. The enzyme catalyses a purine 2'-deoxy-D-ribonucleoside + phosphate = a purine nucleobase + 2-deoxy-alpha-D-ribose 1-phosphate. Catalyzes the reversible phosphorolytic breakdown of the N-glycosidic bond in the beta-(deoxy)ribonucleoside molecules, with the formation of the corresponding free purine bases and pentose-1-phosphate. This is Purine nucleoside phosphorylase DeoD-type from Edwardsiella ictaluri (strain 93-146).